The chain runs to 210 residues: Cell division protein SepF (210 aa).

2 stretches are compositionally biased toward low complexity: residues Gln-36–Gln-47 and Arg-59–Ser-69. Disordered regions lie at residues Gln-36–Ser-69 and Asn-182–Gln-210.

This sequence belongs to the SepF family. In terms of assembly, homodimer. Interacts with FtsZ.

It localises to the cytoplasm. In terms of biological role, cell division protein that is part of the divisome complex and is recruited early to the Z-ring. Probably stimulates Z-ring formation, perhaps through the cross-linking of FtsZ protofilaments. Its function overlaps with FtsA. In Trichodesmium erythraeum (strain IMS101), this protein is Cell division protein SepF.